Consider the following 682-residue polypeptide: Putative protein RhsE (682 aa).

Over residues 348-360 the composition is skewed to basic and acidic residues; it reads ENGEREKAQRRSL. The disordered stretch occupies residues 348 to 372; sequence ENGEREKAQRRSLAETLQQEGSENG.

It belongs to the RHS family.

Functionally, rhs elements have a nonessential function. They may play an important role in the natural ecology of the cell. In Escherichia coli (strain K12), this protein is Putative protein RhsE (rhsE).